The chain runs to 134 residues: uncharacterized protein (134 aa).

This sequence to E.coli YbcV and YdfO.

This is an uncharacterized protein from Escherichia coli (strain K12).